A 608-amino-acid polypeptide reads, in one-letter code: UvrABC system protein C (608 aa).

The GIY-YIG domain occupies 15-93; it reads HQPGVYRMYN…IKQYLPKYNV (79 aa). The region spanning 203 to 238 is the UVR domain; it reads RQVIQSLVEQMEGASQALNFEKAATIRDQIQSMRRV.

The protein belongs to the UvrC family. As to quaternary structure, interacts with UvrB in an incision complex.

Its subcellular location is the cytoplasm. In terms of biological role, the UvrABC repair system catalyzes the recognition and processing of DNA lesions. UvrC both incises the 5' and 3' sides of the lesion. The N-terminal half is responsible for the 3' incision and the C-terminal half is responsible for the 5' incision. The polypeptide is UvrABC system protein C (Aliivibrio salmonicida (strain LFI1238) (Vibrio salmonicida (strain LFI1238))).